The sequence spans 246 residues: Aquaporin AqpM (246 aa).

The Cytoplasmic portion of the chain corresponds to 1–11 (MVSLTKRCIAE). Residues 12–32 (FIGTFILVFFGAGSAAVTLMI) form a helical membrane-spanning segment. The Extracellular segment spans residues 33–55 (ASGGTSPNPFNIGIGLLGGLGDW). A helical transmembrane segment spans residues 56 to 76 (VAIGLAFGFAIAASIYALGNI). The Cytoplasmic portion of the chain corresponds to 77-103 (SGCHINPAVTIGLWSVKKFPGREVVPY). Positions 82-84 (NPA) match the NPA 1 motif. Residues 104 to 124 (IIAQLLGAAFGSFIFLQCAGI) form a helical membrane-spanning segment. Residues 125–145 (GAATVGGLGATAPFPGISYWQ) are Extracellular-facing. Residues 146 to 166 (AMLAEVVGTFLLMITIMGIAV) form a helical membrane-spanning segment. Topologically, residues 167–172 (DERAPK) are cytoplasmic. The chain crosses the membrane as a helical span at residues 173 to 193 (GFAGIIIGLTVAGIITTLGNI). The Extracellular segment spans residues 194–217 (SGSSLNPARTFGPYLNDMIFAGTN). The NPA 2 motif lies at 199–201 (NPA). Residues 218 to 238 (LWNYYPIYVIGPIVGAVLAAL) form a helical membrane-spanning segment. Residues 239–246 (TYQYLTSE) lie on the Cytoplasmic side of the membrane.

This sequence belongs to the MIP/aquaporin (TC 1.A.8) family. As to quaternary structure, homotetramer.

It localises to the cell membrane. Its function is as follows. Channel that permits osmotically driven movement of water in both directions. It mediates rapid entry or exit of water in response to abrupt changes in osmolarity. Also exhibits a transient but reproducible increase in the initial glycerol flux. This is Aquaporin AqpM (aqpM) from Methanothermobacter marburgensis (strain ATCC BAA-927 / DSM 2133 / JCM 14651 / NBRC 100331 / OCM 82 / Marburg) (Methanobacterium thermoautotrophicum).